The primary structure comprises 193 residues: Large ribosomal subunit protein bL25 (193 aa).

The protein belongs to the bacterial ribosomal protein bL25 family. CTC subfamily. Part of the 50S ribosomal subunit; part of the 5S rRNA/L5/L18/L25 subcomplex. Contacts the 5S rRNA. Binds to the 5S rRNA independently of L5 and L18.

Functionally, this is one of the proteins that binds to the 5S RNA in the ribosome where it forms part of the central protuberance. This Oleidesulfovibrio alaskensis (strain ATCC BAA-1058 / DSM 17464 / G20) (Desulfovibrio alaskensis) protein is Large ribosomal subunit protein bL25.